Here is a 589-residue protein sequence, read N- to C-terminus: Probable arginine--tRNA ligase, cytoplasmic (589 aa).

L-arginine contacts are provided by residues 121-123 (SPN), His132, Tyr332, Asp336, and Gln360. Residues 121–132 (SPNIAKPFHAGH) carry the 'HIGH' region motif. The interval 469-483 (DTGPYLQYAHARLCS) is interaction with tRNA.

It belongs to the class-I aminoacyl-tRNA synthetase family.

The protein resides in the cytoplasm. The protein localises to the cytosol. The enzyme catalyses tRNA(Arg) + L-arginine + ATP = L-arginyl-tRNA(Arg) + AMP + diphosphate. Forms part of a macromolecular complex that catalyzes the attachment of specific amino acids to cognate tRNAs during protein synthesis. The chain is Probable arginine--tRNA ligase, cytoplasmic (argS1) from Dictyostelium discoideum (Social amoeba).